A 130-amino-acid polypeptide reads, in one-letter code: Small ribosomal subunit protein uS8 (130 aa).

The protein belongs to the universal ribosomal protein uS8 family. As to quaternary structure, part of the 30S ribosomal subunit. Contacts proteins S5 and S12.

One of the primary rRNA binding proteins, it binds directly to 16S rRNA central domain where it helps coordinate assembly of the platform of the 30S subunit. This chain is Small ribosomal subunit protein uS8, found in Pseudomonas entomophila (strain L48).